A 61-amino-acid chain; its full sequence is Conotoxin TeAr154 (61 aa).

The first 19 residues, 1 to 19, serve as a signal peptide directing secretion; it reads MHCLPVFVILLLLTASGLS. A propeptide spanning residues 20–47 is cleaved from the precursor; that stretch reads VDARPKTEDDVPLSSFRDNTKSTLQRLL. Glu-57 carries the 4-carboxyglutamate modification.

Contains 2 disulfide bonds that can be either 'C1-C3, C2-C4' or 'C1-C4, C2-C3', since these disulfide connectivities have been observed for conotoxins with cysteine framework V (for examples, see AC P0DQQ7 and AC P81755). Post-translationally, contains 2 disulfide bonds. As to expression, expressed by the venom duct.

It localises to the secreted. This chain is Conotoxin TeAr154, found in Conus textile (Cloth-of-gold cone).